Reading from the N-terminus, the 263-residue chain is Endolytic peptidoglycan transglycosylase RlpA (263 aa).

The N-terminal stretch at 1–16 is a signal peptide; that stretch reads MNRIYLYLLIVLILAG. Cys-17 carries the N-palmitoyl cysteine lipid modification. Cys-17 carries S-diacylglycerol cysteine lipidation. The SPOR domain maps to 182-257; the sequence is KNNALEYVIQ…AGYDSAFIKT (76 aa).

This sequence belongs to the RlpA family.

It localises to the cell membrane. In terms of biological role, lytic transglycosylase with a strong preference for naked glycan strands that lack stem peptides. This chain is Endolytic peptidoglycan transglycosylase RlpA, found in Vibrio cholerae serotype O1 (strain ATCC 39315 / El Tor Inaba N16961).